Consider the following 626-residue polypeptide: E3 ubiquitin-protein ligase HRD1 (626 aa).

Residues 1 to 15 form the signal peptide; sequence MQLLLSSVCMALTSA. Over 16-38 the chain is Lumenal; the sequence is VIGFAYYQKQQFYPAVVYITKSN. A helical membrane pass occupies residues 39-59; the sequence is ASMGVIYIQFFVIVFMFGKLL. The Cytoplasmic portion of the chain corresponds to 60 to 96; it reads SKIFLGTLRAAEFEHLLERFWYALTETCLAFTVFRDD. Residues 97 to 117 traverse the membrane as a helical segment; the sequence is FNPRFVALFTVLLFLKSFHWL. At 118-128 the chain is on the lumenal side; sequence AEERVDFMERS. A helical membrane pass occupies residues 129 to 149; the sequence is PVLGWLFHIRVGSLLTVLGIL. Residues 150–167 lie on the Cytoplasmic side of the membrane; the sequence is DYVLLIHAYNSTLVRGPT. A helical membrane pass occupies residues 168–188; it reads VQLVFGFEYAILLTVIASTAI. The Lumenal segment spans residues 189 to 222; sequence KYVLHAAEMRTDTPWENKAVFLLYTELVIGLIKV. Residues 223-243 traverse the membrane as a helical segment; it reads VLYILFVVIMAKIYALPMFVF. The interaction with p53/TP53 stretch occupies residues 234 to 268; sequence KIYALPMFVFRPMFFTIRNFRKALNDVIMSRRAIR. Topologically, residues 244-626 are cytoplasmic; the sequence is RPMFFTIRNF…AATNERTTAE (383 aa). The segment at 289–328 adopts an RING-type; atypical zinc-finger fold; the sequence is CIICREDMVNHSKKLPCGHIFHTTCLRSWFQRQQTCPTCR. Residues 569–600 are disordered; sequence DADEDDIPSTATEAVSIPNSDADFEENSSELG. A compositionally biased stretch (polar residues) spans 577–587; the sequence is STATEAVSIPN.

This sequence belongs to the HRD1 family. As to quaternary structure, homodimer. Interacts with p53. May interact with Septin2.

The protein localises to the endoplasmic reticulum membrane. The catalysed reaction is S-ubiquitinyl-[E2 ubiquitin-conjugating enzyme]-L-cysteine + [acceptor protein]-L-lysine = [E2 ubiquitin-conjugating enzyme]-L-cysteine + N(6)-ubiquitinyl-[acceptor protein]-L-lysine.. Its pathway is protein modification; protein ubiquitination. In terms of biological role, acts as an E3 ubiquitin-protein ligase which accepts ubiquitin specifically from endoplasmic reticulum-associated UBC7 E2 ligase and transfers it to substrates, promoting their degradation. Component of the endoplasmic reticulum quality control (ERQC) system also called ER-associated degradation (ERAD) involved in ubiquitin-dependent degradation of misfolded endoplasmic reticulum proteins. Also promotes the degradation of normal but naturally short-lived proteins. Protects cells from ER stress-induced apoptosis. Sequesters p53 in the cytoplasm and promotes its degradation, thereby negatively regulating its biological function in transcription, cell cycle regulation and apoptosis. The protein is E3 ubiquitin-protein ligase HRD1 (sip3) of Drosophila melanogaster (Fruit fly).